The primary structure comprises 325 residues: Elongation factor P--(R)-beta-lysine ligase (325 aa).

Substrate is bound at residue 76–78 (SPE). ATP-binding positions include 100-102 (RNE) and asparagine 109. Position 118 (tyrosine 118) interacts with substrate. 244-245 (EL) provides a ligand contact to ATP. Glutamate 251 contacts substrate. Glycine 300 lines the ATP pocket.

This sequence belongs to the class-II aminoacyl-tRNA synthetase family. EpmA subfamily. In terms of assembly, homodimer.

The enzyme catalyses D-beta-lysine + L-lysyl-[protein] + ATP = N(6)-((3R)-3,6-diaminohexanoyl)-L-lysyl-[protein] + AMP + diphosphate + H(+). Its function is as follows. With EpmB is involved in the beta-lysylation step of the post-translational modification of translation elongation factor P (EF-P) on 'Lys-34'. Catalyzes the ATP-dependent activation of (R)-beta-lysine produced by EpmB, forming a lysyl-adenylate, from which the beta-lysyl moiety is then transferred to the epsilon-amino group of EF-P 'Lys-34'. This Escherichia coli O139:H28 (strain E24377A / ETEC) protein is Elongation factor P--(R)-beta-lysine ligase.